We begin with the raw amino-acid sequence, 301 residues long: GTPase Era (301 aa).

The region spanning Tyr-7–Glu-175 is the Era-type G domain. Residues Gly-15–Ser-22 form a G1 region. GTP is bound at residue Gly-15 to Ser-22. Residues Gln-41–His-45 are G2. Residues Asp-62 to Gly-65 are G3. GTP-binding positions include Asp-62–Leu-66 and Asn-124–Asp-127. The G4 stretch occupies residues Asn-124 to Asp-127. Residues Ile-154 to Ala-156 form a G5 region. The 78-residue stretch at Leu-206 to Ser-283 folds into the KH type-2 domain.

It belongs to the TRAFAC class TrmE-Era-EngA-EngB-Septin-like GTPase superfamily. Era GTPase family. As to quaternary structure, monomer.

The protein resides in the cytoplasm. Its subcellular location is the cell inner membrane. In terms of biological role, an essential GTPase that binds both GDP and GTP, with rapid nucleotide exchange. Plays a role in 16S rRNA processing and 30S ribosomal subunit biogenesis and possibly also in cell cycle regulation and energy metabolism. This chain is GTPase Era, found in Escherichia coli O157:H7.